Here is a 226-residue protein sequence, read N- to C-terminus: 7-cyano-7-deazaguanine synthase (226 aa).

Residue 11 to 21 coordinates ATP; sequence LSGGLDSATCL. Residues Cys-191, Cys-201, Cys-204, and Cys-207 each coordinate Zn(2+).

This sequence belongs to the QueC family. Requires Zn(2+) as cofactor.

The catalysed reaction is 7-carboxy-7-deazaguanine + NH4(+) + ATP = 7-cyano-7-deazaguanine + ADP + phosphate + H2O + H(+). It functions in the pathway purine metabolism; 7-cyano-7-deazaguanine biosynthesis. In terms of biological role, catalyzes the ATP-dependent conversion of 7-carboxy-7-deazaguanine (CDG) to 7-cyano-7-deazaguanine (preQ(0)). The sequence is that of 7-cyano-7-deazaguanine synthase from Aromatoleum aromaticum (strain DSM 19018 / LMG 30748 / EbN1) (Azoarcus sp. (strain EbN1)).